The primary structure comprises 553 residues: ATP synthase F(1) complex subunit alpha, mitochondrial (553 aa).

A mitochondrion-targeting transit peptide spans 1-43 (MLSVRVAAAVARALPRRAGLVSKNALGSSFVGARNLHASNTRL). Residues Ser-53 and Ser-65 each carry the phosphoserine modification. At Ser-76 the chain carries Phosphoserine; alternate. Ser-76 carries an O-linked (GlcNAc) serine; alternate glycan. Residue Ser-106 is modified to Phosphoserine. Residues Lys-123, Lys-126, and Lys-132 each carry the N6-acetyllysine modification. Thr-134 carries the phosphothreonine modification. An N6-acetyllysine; alternate modification is found at Lys-161. The residue at position 161 (Lys-161) is an N6-succinyllysine; alternate. Ser-166 is modified (phosphoserine). Lys-167 carries the N6-acetyllysine; alternate modification. Lys-167 carries the N6-succinyllysine; alternate modification. Ser-184 is subject to Phosphoserine. Residue Arg-204 is modified to Omega-N-methylarginine. ATP contacts are provided by Gln-215, Gly-217, Lys-218, Thr-219, and Ser-220. Thr-219 contacts Mg(2+). 2 positions are modified to N6-acetyllysine; alternate: Lys-230 and Lys-239. An N6-succinyllysine; alternate mark is found at Lys-230 and Lys-239. An N6-acetyllysine modification is found at Lys-240. Residues Lys-261 and Lys-305 each carry the N6-acetyllysine; alternate modification. Lys-261 and Lys-305 each carry N6-succinyllysine; alternate. Asp-312 is a Mg(2+) binding site. Residue Lys-427 is modified to N6-acetyllysine; alternate. Lys-427 carries the N6-succinyllysine; alternate modification. An N6-acetyllysine modification is found at Lys-434. ATP contacts are provided by Gln-473 and Gln-475. N6-acetyllysine; alternate is present on residues Lys-498 and Lys-506. 2 positions are modified to N6-succinyllysine; alternate: Lys-498 and Lys-506. Ser-521 carries the post-translational modification Phosphoserine. N6-acetyllysine; alternate occurs at positions 531 and 539. N6-succinyllysine; alternate is present on residues Lys-531 and Lys-539. N6-acetyllysine is present on Lys-541.

Belongs to the ATPase alpha/beta chains family. Homotrimer. Component of the ATP synthase complex composed at least of ATP5F1A/subunit alpha, ATP5F1B/subunit beta, ATP5MC1/subunit c (homooctomer), MT-ATP6/subunit a, MT-ATP8/subunit 8, ATP5ME/subunit e, ATP5MF/subunit f, ATP5MG/subunit g, ATP5MK/subunit k, ATP5MJ/subunit j, ATP5F1C/subunit gamma, ATP5F1D/subunit delta, ATP5F1E/subunit epsilon, ATP5PF/subunit F6, ATP5PB/subunit b, ATP5PD/subunit d, ATP5PO/subunit OSCP. ATP synthase complex consists of a soluble F(1) head domain (subunits alpha(3) and beta(3)) - the catalytic core - and a membrane F(0) domain - the membrane proton channel (subunits c, a, 8, e, f, g, k and j). These two domains are linked by a central stalk (subunits gamma, delta, and epsilon) rotating inside the F1 region and a stationary peripheral stalk (subunits F6, b, d, and OSCP). Interacts with ATPAF2. Interacts with HRG; the interaction occurs on the surface of T-cells and alters the cell morphology when associated with concanavalin (in vitro). Interacts with PLG (angiostatin peptide); the interaction inhibits most of the angiogenic properties of angiostatin. Interacts with BLOC1S1. Interacts with BCL2L1 isoform BCL-X(L); the interaction mediates the association of BCL2L1 isoform BCL-X(L) with the mitochondrial membrane F(1)F(0) ATP synthase and enhances neurons metabolic efficiency. Interacts with CLN5 and PPT1. Interacts with S100A1; this interaction increases F1-ATPase activity. Interacts with ABCB7; this interaction allows the regulation of cellular iron homeostasis and cellular reactive oxygen species (ROS) levels in cardiomyocytes. Post-translationally, acetylated on lysine residues. BLOC1S1 is required for acetylation. Acetylation of Lys-132, Lys-230 and Lys-498 is observed in liver mitochondria from fasted mice but not from fed mice.

It is found in the mitochondrion inner membrane. The protein resides in the cell membrane. In terms of biological role, subunit alpha, of the mitochondrial membrane ATP synthase complex (F(1)F(0) ATP synthase or Complex V) that produces ATP from ADP in the presence of a proton gradient across the membrane which is generated by electron transport complexes of the respiratory chain. ATP synthase complex consist of a soluble F(1) head domain - the catalytic core - and a membrane F(1) domain - the membrane proton channel. These two domains are linked by a central stalk rotating inside the F(1) region and a stationary peripheral stalk. During catalysis, ATP synthesis in the catalytic domain of F(1) is coupled via a rotary mechanism of the central stalk subunits to proton translocation. In vivo, can only synthesize ATP although its ATP hydrolase activity can be activated artificially in vitro. With the catalytic subunit beta (ATP5F1B), forms the catalytic core in the F(1) domain. Subunit alpha does not bear the catalytic high-affinity ATP-binding sites. This chain is ATP synthase F(1) complex subunit alpha, mitochondrial, found in Mus musculus (Mouse).